A 631-amino-acid polypeptide reads, in one-letter code: MGKVLGIDLGTTNSAMAVFEGNEGKIIANKEGRNTTPSVVAFTDKGEILVGDPAKRQAITNPQKTIYSIKRIMGLMMSEDKAKEAQKRLPYKVVDRNGACAVEIADKVYTPQEISAKILMKLKEDAEAYLGEEVSEAVITVPAYFNDAQRKATKEAGTIAGLNVLRIINEPTSAALAYGLDKKHAEKIVVYDLGGGTFDVTVLETGDNVVEVLATGGDAFLGGDDFDNRIIDWAAKEFEAENGIDLKKDVMALQRLKDAAENAKKELSSANETEINLPFITADATGPKHLVKKISRAKFESLIDDLIEQTIQKIDFVIKDAGLAKSDIAEVVMVGGSTRIPKVQQRVKDFIGKELNKSVNPDEVVALGAAIQGGVLKGDVKDVLLLDVTPLSLGIETLGGVMTKIIDRGTTIPVKKSQVFSTAEDNQPAVTIQVLQGERELARDNKSLGMFELSGIPAAPRGVPQIEVTFDIDANGILTVSAKDKATGKSQEIKITGSSGLSDSEIEKMVKDAELHKEEDSKRKSMIEAKNQADSLLYQTEKSLGEFKDQLEESERTKIESAINDLKETLKKENLTKEEIDEKVKALTEVSHKLAEAMYKKENPQAADAQQGNTANAGKKKDDDVIDAEVE.

At Thr197 the chain carries Phosphothreonine; by autocatalysis. Positions 600-631 (KKENPQAADAQQGNTANAGKKKDDDVIDAEVE) are disordered.

It belongs to the heat shock protein 70 family.

Its function is as follows. Acts as a chaperone. The protein is Chaperone protein DnaK of Wolinella succinogenes (strain ATCC 29543 / DSM 1740 / CCUG 13145 / JCM 31913 / LMG 7466 / NCTC 11488 / FDC 602W) (Vibrio succinogenes).